Reading from the N-terminus, the 381-residue chain is Heme A synthase (381 aa).

A disordered region spans residues 1–28 (MSNRTIFEEVSSDSKQQSSPTPGGIDRK). The next 8 helical transmembrane spans lie at 36–56 (IRVWLAVLFALVVAMIAVGGL), 125–145 (VIGLIWALGFFGFLVTRSIPT), 151–171 (LLLPGILGGVQGAIGWWMVAS), 187–207 (LATHLGLAFVILGFLAWYMFL), 230–250 (STGLLHFAFLQILLGALVAGI), 287–307 (LVQFIHRVAGYLLFAFAVVVW), 320–340 (FAFNAVFAALSLQLVIGIVTV), and 344–364 (APVEIAIVHQAVAVLVWVLIL). Position 292 (H292) interacts with heme. Heme is bound at residue H352.

It belongs to the COX15/CtaA family. Type 2 subfamily. As to quaternary structure, interacts with CtaB. Heme b serves as cofactor.

It localises to the cell membrane. It carries out the reaction Fe(II)-heme o + 2 A + H2O = Fe(II)-heme a + 2 AH2. It participates in porphyrin-containing compound metabolism; heme A biosynthesis; heme A from heme O: step 1/1. Functionally, catalyzes the conversion of heme O to heme A by two successive hydroxylations of the methyl group at C8. The first hydroxylation forms heme I, the second hydroxylation results in an unstable dihydroxymethyl group, which spontaneously dehydrates, resulting in the formyl group of heme A. The sequence is that of Heme A synthase from Ruegeria sp. (strain TM1040) (Silicibacter sp.).